A 168-amino-acid polypeptide reads, in one-letter code: Disulfide bond formation protein B 2 (168 aa).

Residues Met-1 to Phe-9 are Cytoplasmic-facing. A helical transmembrane segment spans residues Phe-10–His-26. Topologically, residues Leu-27–Leu-44 are periplasmic. Cysteines 36 and 39 form a disulfide. The helical transmembrane segment at Met-45–Pro-61 threads the bilayer. Residues Ala-62–Arg-67 lie on the Cytoplasmic side of the membrane. The chain crosses the membrane as a helical span at residues Ala-68 to Gly-85. At Arg-86 to Glu-140 the chain is on the periplasmic side. A disulfide bridge links Cys-100 with Cys-126. A helical membrane pass occupies residues Trp-141 to Ala-159. Residues Tyr-160–Ala-168 lie on the Cytoplasmic side of the membrane.

This sequence belongs to the DsbB family.

The protein localises to the cell inner membrane. In terms of biological role, required for disulfide bond formation in some periplasmic proteins. Acts by oxidizing the DsbA protein. This chain is Disulfide bond formation protein B 2, found in Pseudomonas entomophila (strain L48).